We begin with the raw amino-acid sequence, 164 residues long: SsrA-binding protein (164 aa).

The interval 141–164 (KLHDKRQDEKQKSIKKEINSALKR) is disordered. The segment covering 145–158 (KRQDEKQKSIKKEI) has biased composition (basic and acidic residues).

It belongs to the SmpB family.

The protein resides in the cytoplasm. Its function is as follows. Required for rescue of stalled ribosomes mediated by trans-translation. Binds to transfer-messenger RNA (tmRNA), required for stable association of tmRNA with ribosomes. tmRNA and SmpB together mimic tRNA shape, replacing the anticodon stem-loop with SmpB. tmRNA is encoded by the ssrA gene; the 2 termini fold to resemble tRNA(Ala) and it encodes a 'tag peptide', a short internal open reading frame. During trans-translation Ala-aminoacylated tmRNA acts like a tRNA, entering the A-site of stalled ribosomes, displacing the stalled mRNA. The ribosome then switches to translate the ORF on the tmRNA; the nascent peptide is terminated with the 'tag peptide' encoded by the tmRNA and targeted for degradation. The ribosome is freed to recommence translation, which seems to be the essential function of trans-translation. This chain is SsrA-binding protein, found in Prochlorococcus marinus (strain MIT 9301).